The primary structure comprises 279 residues: Urease accessory protein UreD (279 aa).

It belongs to the UreD family. UreD, UreF and UreG form a complex that acts as a GTP-hydrolysis-dependent molecular chaperone, activating the urease apoprotein by helping to assemble the nickel containing metallocenter of UreC. The UreE protein probably delivers the nickel.

The protein resides in the cytoplasm. In terms of biological role, required for maturation of urease via the functional incorporation of the urease nickel metallocenter. This Trichodesmium erythraeum (strain IMS101) protein is Urease accessory protein UreD.